The primary structure comprises 91 residues: Cell division topological specificity factor (91 aa).

The protein belongs to the MinE family.

Prevents the cell division inhibition by proteins MinC and MinD at internal division sites while permitting inhibition at polar sites. This ensures cell division at the proper site by restricting the formation of a division septum at the midpoint of the long axis of the cell. The polypeptide is Cell division topological specificity factor (Chloroflexus aggregans (strain MD-66 / DSM 9485)).